A 657-amino-acid chain; its full sequence is Threonine--tRNA ligase (657 aa).

Positions 1–61 (MINVTLPDGS…EGDASVAIIT (61 aa)) constitute a TGS domain. The tract at residues 244–549 (DHRKLGAQLD…LIENYAGSFP (306 aa)) is catalytic. 3 residues coordinate Zn(2+): cysteine 349, histidine 400, and histidine 526.

It belongs to the class-II aminoacyl-tRNA synthetase family. In terms of assembly, homodimer. The cofactor is Zn(2+).

The protein resides in the cytoplasm. It catalyses the reaction tRNA(Thr) + L-threonine + ATP = L-threonyl-tRNA(Thr) + AMP + diphosphate + H(+). Functionally, catalyzes the attachment of threonine to tRNA(Thr) in a two-step reaction: L-threonine is first activated by ATP to form Thr-AMP and then transferred to the acceptor end of tRNA(Thr). Also edits incorrectly charged L-seryl-tRNA(Thr). The sequence is that of Threonine--tRNA ligase from Hyphomonas neptunium (strain ATCC 15444).